The sequence spans 274 residues: tRNA (guanine-N(1)-)-methyltransferase (274 aa).

S-adenosyl-L-methionine is bound by residues Gly116 and 140 to 145 (LGDYVL).

The protein belongs to the RNA methyltransferase TrmD family. In terms of assembly, homodimer.

The protein localises to the cytoplasm. It catalyses the reaction guanosine(37) in tRNA + S-adenosyl-L-methionine = N(1)-methylguanosine(37) in tRNA + S-adenosyl-L-homocysteine + H(+). Functionally, specifically methylates guanosine-37 in various tRNAs. This Arthrobacter sp. (strain FB24) protein is tRNA (guanine-N(1)-)-methyltransferase.